The chain runs to 281 residues: MSSYQNHKALAELTLGKPTAYCDYYDATLLQAVPRSMNREPLGLYPDNLPFHGADIWTLYELSWLNSNGLPQVAVGEISLNADSINLIESKSFKLYLNSFNQTIFADKESVRMTLQRDLAACAQGNVSVALYDLDEITGQPISNFNGECLDKQDIRIDSYEFNADYLQGAAGKDHVEESLVSHLLKSNCLITHQPDWGSVQIHYRGPQIDHEALLRYLVSFRHHNEFHEQCVERIFNDIMRFCQPETLTVYARYTRRGGLDINPWRSNTDFVPLTGRLARQ.

Residue 88-90 coordinates substrate; it reads IES. 90–91 contacts NADPH; the sequence is SK. The active-site Thioimide intermediate is the C189. Catalysis depends on D196, which acts as the Proton donor. 228–229 lines the substrate pocket; sequence HE. An NADPH-binding site is contributed by 257 to 258; it reads RG.

Belongs to the GTP cyclohydrolase I family. QueF type 2 subfamily. Homodimer.

The protein resides in the cytoplasm. It carries out the reaction 7-aminomethyl-7-carbaguanine + 2 NADP(+) = 7-cyano-7-deazaguanine + 2 NADPH + 3 H(+). Its pathway is tRNA modification; tRNA-queuosine biosynthesis. Functionally, catalyzes the NADPH-dependent reduction of 7-cyano-7-deazaguanine (preQ0) to 7-aminomethyl-7-deazaguanine (preQ1). The chain is NADPH-dependent 7-cyano-7-deazaguanine reductase from Yersinia pestis bv. Antiqua (strain Antiqua).